Reading from the N-terminus, the 949-residue chain is Insulin receptor substrate 1 (949 aa).

One can recognise a PH domain in the interval 8 to 109; the sequence is GMALSGYLKK…WLDKLLVLQR (102 aa). One can recognise an IRS-type PTB domain in the interval 122 to 236; it reads YDQVWQVVIQ…SAMSAKTESN (115 aa). The disordered stretch occupies residues 247-270; the sequence is PDLSHEPMRKRSSSANEASKPINV. Phosphoserine is present on residues S286, S287, and S342. Over residues 304 to 345 the composition is skewed to polar residues; that stretch reads RNGTLSESSNQTYFGSNHGLRSNTISGNRPHSTNKHSNSPTF. Residues 304-373 form a disordered region; that stretch reads RNGTLSESSN…SDDNGSYSHY (70 aa). At Y410 the chain carries Phosphotyrosine; by INSR. Residues 410 to 413 carry the YXXM motif 1 motif; the sequence is YIPM. The tract at residues 530 to 556 is disordered; that stretch reads RSQSSITKEGSGYGTSGNRQKKSTSAP. S554 carries the post-translational modification Phosphoserine. Positions 640–643 match the YXXM motif 2 motif; sequence YLEM. The span at 696–706 shows a compositional bias: basic and acidic residues; it reads REQTTSEEKKS. Positions 696–718 are disordered; sequence REQTTSEEKKSNSPLNEKPFSLK. Y892 carries the post-translational modification Phosphotyrosine; by INSR. The segment at 906 to 949 is disordered; sequence AKYLKRGSRESPPVSACPEDGNTYAKIDFDQSDSSSSSSNIFNT. Phosphoserine occurs at positions 913 and 916. Residue Y929 is modified to Phosphotyrosine; by INSR. The span at 937-949 shows a compositional bias: low complexity; it reads SDSSSSSSNIFNT.

In terms of assembly, bindings to phosphatidylinositol 3-kinase and SHP2.

Its function is as follows. Activates phosphatidylinositol 3-kinase when bound to the regulatory p85 subunit. May mediate the control of various cellular processes by insulin-like peptides. When phosphorylated by the insulin receptor binds specifically to various cellular proteins containing SH2 domains. Involved in control of cell proliferation, cell size, and body and organ growth throughout development. Also has a role in a signaling pathway controlling the physiological response required to endure periods of low nutrient conditions. Insulin/insulin-like growth factor (IGF) signaling pathway has a role in regulating aging and is necessary in the ovary for vitellogenic maturation. In Drosophila yakuba (Fruit fly), this protein is Insulin receptor substrate 1.